The following is a 542-amino-acid chain: Excitatory amino acid transporter 1 (542 aa).

Residues 1–47 (MTKSNGEEPKMGGRMERFQQGVRKRTLLAKKKVQNITKEDVKSYLFR) lie on the Cytoplasmic side of the membrane. The chain crosses the membrane as a helical span at residues 48 to 68 (NAFVLLTVTAVIVGTILGFTL). The Extracellular segment spans residues 69–86 (RPYRMSYREVKYFSFPGE). Residues 87 to 108 (LLMRMLQMLVLPLIISSLVTGM) traverse the membrane as a helical segment. The Cytoplasmic segment spans residues 109–122 (AALDSKASGKMGMR). A helical membrane pass occupies residues 123-145 (AVVYYMTTTIIAVVIGIIIVIII). Topologically, residues 146 to 236 (HPGKGTKENM…ITEELVPVPG (91 aa)) are extracellular. A helical membrane pass occupies residues 237 to 260 (SVNGVNALGLVVFSMCFGFVIGNM). Residues 261–269 (KEQGQALRE) are Cytoplasmic-facing. A helical membrane pass occupies residues 270–297 (FFDSLNEAIMRLVAVIMWYAPVGILFLI). Topologically, residues 298–318 (AGKIVEMEDMGVIGGQLAMYT) are extracellular. A helical transmembrane segment spans residues 319 to 340 (VTVIVGLLIHAVIVLPLLYFLV). Residues 341–345 (TRKNP) are Cytoplasmic-facing. An intramembrane region (discontinuously helical) is located at residues 346–376 (WVFIGGLLQALITALGTSSSSATLPITFKCL). 363–365 (SSS) contributes to the L-aspartate binding site. Residues 377–385 (EENNGVDKR) are Cytoplasmic-facing. A helical membrane pass occupies residues 386 to 412 (VTRFVLPVGATINMDGTALYEALAAIF). Na(+) contacts are provided by glycine 394, threonine 396, and asparagine 398. Threonine 402 lines the L-aspartate pocket. Over 413–425 (IAQVNNFELNFGQ) the chain is Extracellular. The discontinuously helical intramembrane region spans 426–459 (IITISITATAASIGAAGIPQAGLVTMVIVLTSVG). 443–447 (IPQAG) is an L-aspartate binding site. The Extracellular segment spans residues 460–472 (LPTDDITLIIAVD). A helical membrane pass occupies residues 473 to 494 (WFLDRLRTTTNVLGDSLGAGIV). The L-aspartate site is built by aspartate 476 and asparagine 483. Positions 483 and 487 each coordinate Na(+). At 495–542 (EHLSRHELKNRDVEMGNSVIEENEMKKPYQLIAQDNETEKPIDSETKM) the chain is on the cytoplasmic side. Serine 512 carries the phosphoserine modification.

The protein belongs to the dicarboxylate/amino acid:cation symporter (DAACS) (TC 2.A.23) family. SLC1A3 subfamily. Homotrimer. Post-translationally, glycosylated. In terms of tissue distribution, detected in brain. Detected at very much lower levels in heart, lung, placenta and skeletal muscle. Highly expressed in cerebellum, but also found in frontal cortex, hippocampus and basal ganglia.

The protein localises to the cell membrane. The catalysed reaction is K(+)(in) + L-glutamate(out) + 3 Na(+)(out) + H(+)(out) = K(+)(out) + L-glutamate(in) + 3 Na(+)(in) + H(+)(in). It carries out the reaction K(+)(in) + L-aspartate(out) + 3 Na(+)(out) + H(+)(out) = K(+)(out) + L-aspartate(in) + 3 Na(+)(in) + H(+)(in). It catalyses the reaction D-aspartate(out) + K(+)(in) + 3 Na(+)(out) + H(+)(out) = D-aspartate(in) + K(+)(out) + 3 Na(+)(in) + H(+)(in). In terms of biological role, sodium-dependent, high-affinity amino acid transporter that mediates the uptake of L-glutamate and also L-aspartate and D-aspartate. Functions as a symporter that transports one amino acid molecule together with two or three Na(+) ions and one proton, in parallel with the counter-transport of one K(+) ion. Mediates Cl(-) flux that is not coupled to amino acid transport; this avoids the accumulation of negative charges due to aspartate and Na(+) symport. Plays a redundant role in the rapid removal of released glutamate from the synaptic cleft, which is essential for terminating the postsynaptic action of glutamate. In Homo sapiens (Human), this protein is Excitatory amino acid transporter 1.